Reading from the N-terminus, the 305-residue chain is Ankyrin repeat domain-containing protein 23 (305 aa).

A coiled-coil region spans residues 41 to 72 (QEAVAREKLKLEEEKKKKLERFNSTRFNLDNL). A compositionally biased stretch (basic residues) spans 83-92 (KKRLRHRVPP). Positions 83–104 (KKRLRHRVPPRKPEPLVKPQSQ) are disordered. ANK repeat units follow at residues 143 to 172 (LHRT…TVDA), 176 to 205 (LDRT…RVNA), 209 to 238 (IGST…HLNA), and 242 to 271 (EGDT…ELGV). The tract at residues 178-195 (RTPVFWACRGGHLVILKQ) is interaction with TTN.

As to quaternary structure, interacts with titin/TTN and MYPN. As to expression, mainly expressed in heart, skeletal muscle and brown adipose tissues.

It is found in the nucleus. May be involved in the energy metabolism. Could be a molecular link between myofibrillar stretch-induced signaling pathways and muscle gene expression. The protein is Ankyrin repeat domain-containing protein 23 (ANKRD23) of Homo sapiens (Human).